Reading from the N-terminus, the 773-residue chain is MKAAVLDLGSLLAKLFETSTAPPAGPSSRPSGGAAAAGSGGSRAGTPLGTAPTLLRALAPDSPSASRRSPAPLLSSPYSRGSAASRAAGAVGTLLSWPSSPRAGKAPPQPPTPSGGGCSPARLVVPARPPSGPGGVWAALPRNPLQPGPGERELGACVAPGAGPRTLFLTLPDIGEEGASDGDSGDGEARGLSEGRRRHGFTVRSKDSLPTHFTRNVQKAIDKYTCKSLSSFSSSGSHTPTGAHTSWSGSATQSSTTGSSTERGSVYSWRDDEFDEASSQSVQRLLWEVEEMLFEGKVNPQTQSLLAECGEWTRRSLHLRVLGRQLILPTDKGVQHFQGSTPASAVHRPPLSACGHSSNIRELCISGSQIVPAALSASALPGPDDTGVADLTARSSLEEEVYHVDGKIEEYFAFDRKEDDDECLEQKPAQPGRKWRKLGLPPVSPRDCVKDAVAAEVFDHVWTNMVELLEELIRKHWETTLTEGKKQRETLKVAGNRFPHVLVPHAHADGASGPPSGHAEAHGISLASRLNPPQIHHFSSSFYSDMNGVMTIQAKPLQRRPAYFADRTQNEKEDKASGGGAGALSSAPHRLGRASDTHGLSPSAKKTPVPWRLPSLASDSQRLKTPNIYSDEVLRGTKLPTGVDHMASPLVQTSRSRFPPLVTETRGQNTAVPGCRLVSYRGRHLQNRVLSAMPDGTERSRLRERTATLERLSRPSTTHTFRQSDTPRKSSLTQMEFAAHTWTGQSILTGSQYVPKSFQRTTLTFKRRFQVTS.

Low complexity-rich tracts occupy residues 18–37 and 54–90; these read TSTAPPAGPSSRPSGGAAAA and LLRALAPDSPSASRRSPAPLLSSPYSRGSAASRAAGA. 4 disordered regions span residues 18-155, 173-210, 232-264, and 568-613; these read TSTA…RELG, DIGEEGASDGDSGDGEARGLSEGRRRHGFTVRSKDSLP, FSSSGSHTPTGAHTSWSGSATQSSTTGSSTERG, and TQNE…PWRL. Residues 174-186 show a composition bias toward acidic residues; the sequence is IGEEGASDGDSGD. Positions 245–264 are enriched in low complexity; the sequence is TSWSGSATQSSTTGSSTERG.

It belongs to the FAM149 family.

In Homo sapiens (Human), this protein is Protein FAM149A (FAM149A).